We begin with the raw amino-acid sequence, 400 residues long: Ribosomal RNA large subunit methyltransferase I (400 aa).

The PUA domain maps to Phe-6–Glu-84.

It belongs to the methyltransferase superfamily. RlmI family.

The protein resides in the cytoplasm. The catalysed reaction is cytidine(1962) in 23S rRNA + S-adenosyl-L-methionine = 5-methylcytidine(1962) in 23S rRNA + S-adenosyl-L-homocysteine + H(+). Specifically methylates the cytosine at position 1962 (m5C1962) of 23S rRNA. The sequence is that of Ribosomal RNA large subunit methyltransferase I from Klebsiella pneumoniae subsp. pneumoniae (strain ATCC 700721 / MGH 78578).